The primary structure comprises 466 residues: Asparagine--tRNA ligase (466 aa).

The protein belongs to the class-II aminoacyl-tRNA synthetase family. As to quaternary structure, homodimer.

Its subcellular location is the cytoplasm. It carries out the reaction tRNA(Asn) + L-asparagine + ATP = L-asparaginyl-tRNA(Asn) + AMP + diphosphate + H(+). The polypeptide is Asparagine--tRNA ligase (Shewanella loihica (strain ATCC BAA-1088 / PV-4)).